Reading from the N-terminus, the 291-residue chain is 11-beta-hydroxysteroid dehydrogenase 1 (291 aa).

The Cytoplasmic portion of the chain corresponds to 1-7 (MAFMKTH). A helical; Signal-anchor for type II membrane protein membrane pass occupies residues 8 to 24 (LLPILGLFMAYYYYSAY). The Lumenal segment spans residues 25–291 (EEFRPEMLQG…TSYSTDGLIN (267 aa)). Residues 41–67 (GASK…TARS), 92–93 (TM), and 119–121 (NHI) each bind NADP(+). N-linked (GlcNAc...) asparagine glycosylation is found at Asn123 and Asn162. Ser170 serves as a coordination point for substrate. Catalysis depends on Tyr183, which acts as the Proton acceptor. Position 183–187 (183–187 (YSASK)) interacts with NADP(+). Asn207 carries N-linked (GlcNAc...) asparagine glycosylation. 218–222 (IDTDT) serves as a coordination point for NADP(+).

It belongs to the short-chain dehydrogenases/reductases (SDR) family. Homodimer. As to expression, abundantly expressed in the liver, followed by fibroblasts, also detected in the brain, lung, heart, and ovary, and in smaller amounts in kidney, skin, and spleen.

The protein localises to the endoplasmic reticulum membrane. It carries out the reaction an 11beta-hydroxysteroid + NADP(+) = an 11-oxosteroid + NADPH + H(+). The catalysed reaction is cortisone + NADPH + H(+) = cortisol + NADP(+). It catalyses the reaction corticosterone + NADP(+) = 11-dehydrocorticosterone + NADPH + H(+). The enzyme catalyses a 7beta-hydroxysteroid + NADP(+) = a 7-oxosteroid + NADPH + H(+). It carries out the reaction 7-oxocholesterol + NADPH + H(+) = 7beta-hydroxycholesterol + NADP(+). The catalysed reaction is chenodeoxycholate + NADP(+) = 7-oxolithocholate + NADPH + H(+). It catalyses the reaction 7-oxolithocholate + NADPH + H(+) = ursodeoxycholate + NADP(+). The enzyme catalyses glycochenodeoxycholate + NADP(+) = 7-oxoglycolithocholate + NADPH + H(+). It carries out the reaction taurochenodeoxycholate + NADP(+) = 7-oxotaurolithocholate + NADPH + H(+). The catalysed reaction is tauroursodeoxycholate + NADP(+) = 7-oxotaurolithocholate + NADPH + H(+). It catalyses the reaction glycoursodeoxycholate + NADP(+) = 7-oxoglycolithocholate + NADPH + H(+). The enzyme catalyses 7-oxopregnenolone + NADPH + H(+) = 7beta-hydroxypregnenolone + NADP(+). It carries out the reaction 3beta,7alpha-dihydroxyandrost-5-en-17-one + NADP(+) = 3beta-hydroxy-5-androstene-7,17-dione + NADPH + H(+). The catalysed reaction is 3beta-hydroxy-5-androstene-7,17-dione + NADPH + H(+) = 3beta,7beta-dihydroxyandrost-5-en-17-one + NADP(+). It catalyses the reaction 3beta-hydroxy-5alpha-androstane-7,17-dione + NADPH + H(+) = 3beta,7beta-dihydroxy-5alpha-androstan-17-one + NADP(+). It participates in steroid metabolism. Its function is as follows. Controls the reversible conversion of biologically active glucocorticoids such as cortisone to cortisol, and 11-dehydrocorticosterone to corticosterone in the presence of NADP(H). Participates in the corticosteroid receptor-mediated anti-inflammatory response, as well as metabolic and homeostatic processes. Bidirectional in vitro, predominantly functions as a reductase in vivo, thereby increasing the concentration of active glucocorticoids. It has broad substrate specificity, besides glucocorticoids, it accepts other steroid and sterol substrates. Interconverts 7-oxo- and 7-hydroxy-neurosteroids such as 7-oxopregnenolone and 7beta-hydroxypregnenolone, 7-oxodehydroepiandrosterone (3beta-hydroxy-5-androstene-7,17-dione) and 7beta-hydroxydehydroepiandrosterone (3beta,7beta-dihydroxyandrost-5-en-17-one), among others. Catalyzes the stereo-specific conversion of the major dietary oxysterol, 7-ketocholesterol (7-oxocholesterol), into the more polar 7-beta-hydroxycholesterol metabolite. 7-oxocholesterol is one of the most important oxysterols, it participates in several events such as induction of apoptosis, accumulation in atherosclerotic lesions, lipid peroxidation, and induction of foam cell formation. Mediates the 7-oxo reduction of 7-oxolithocholate mainly to chenodeoxycholate, and to a lesser extent to ursodeoxycholate, both in its free form and when conjugated to glycine or taurine, providing a link between glucocorticoid activation and bile acid metabolism. Catalyzes the synthesis of 7-beta-25-dihydroxycholesterol from 7-oxo-25-hydroxycholesterol in vitro, which acts as a ligand for the G-protein-coupled receptor (GPCR) Epstein-Barr virus-induced gene 2 (EBI2) and may thereby regulate immune cell migration. The sequence is that of 11-beta-hydroxysteroid dehydrogenase 1 (HSD11B1) from Saimiri sciureus (Common squirrel monkey).